The primary structure comprises 131 residues: PDZ domain-containing protein C52A11.3 (131 aa).

Residues 51–127 (LVKLQKDANR…RLYLQIARPH (77 aa)) enclose the PDZ domain.

The polypeptide is PDZ domain-containing protein C52A11.3 (Caenorhabditis elegans).